Consider the following 314-residue polypeptide: Glycine--tRNA ligase alpha subunit (314 aa).

It belongs to the class-II aminoacyl-tRNA synthetase family. In terms of assembly, tetramer of two alpha and two beta subunits.

The protein localises to the cytoplasm. It catalyses the reaction tRNA(Gly) + glycine + ATP = glycyl-tRNA(Gly) + AMP + diphosphate. This chain is Glycine--tRNA ligase alpha subunit, found in Mesorhizobium japonicum (strain LMG 29417 / CECT 9101 / MAFF 303099) (Mesorhizobium loti (strain MAFF 303099)).